The sequence spans 237 residues: Ribosomal RNA small subunit methyltransferase G (237 aa).

S-adenosyl-L-methionine is bound by residues G78, F83, 129-130 (AE), and R148. A disordered region spans residues 218 to 237 (KKETPNKYPRKAGMPNKRPL).

This sequence belongs to the methyltransferase superfamily. RNA methyltransferase RsmG family.

The protein localises to the cytoplasm. In terms of biological role, specifically methylates the N7 position of a guanine in 16S rRNA. This Streptococcus sanguinis (strain SK36) protein is Ribosomal RNA small subunit methyltransferase G.